Reading from the N-terminus, the 276-residue chain is Acyl-[acyl-carrier-protein]--UDP-N-acetylglucosamine O-acyltransferase (276 aa).

The protein belongs to the transferase hexapeptide repeat family. LpxA subfamily. As to quaternary structure, homotrimer.

Its subcellular location is the cytoplasm. The catalysed reaction is a (3R)-hydroxyacyl-[ACP] + UDP-N-acetyl-alpha-D-glucosamine = a UDP-3-O-[(3R)-3-hydroxyacyl]-N-acetyl-alpha-D-glucosamine + holo-[ACP]. It functions in the pathway glycolipid biosynthesis; lipid IV(A) biosynthesis; lipid IV(A) from (3R)-3-hydroxytetradecanoyl-[acyl-carrier-protein] and UDP-N-acetyl-alpha-D-glucosamine: step 1/6. Its function is as follows. Involved in the biosynthesis of lipid A, a phosphorylated glycolipid that anchors the lipopolysaccharide to the outer membrane of the cell. The chain is Acyl-[acyl-carrier-protein]--UDP-N-acetylglucosamine O-acyltransferase from Gloeothece citriformis (strain PCC 7424) (Cyanothece sp. (strain PCC 7424)).